Here is a 247-residue protein sequence, read N- to C-terminus: ATP synthase subunit a, chloroplastic (247 aa).

Helical transmembrane passes span 38 to 58, 95 to 115, 134 to 154, 199 to 219, and 220 to 240; these read QVLITSWFVITILLGSVIIAV, VPFIGTMFLFIFVSNWSGALL, INTTVALALLTSAAYFYAGLS, LVVVVLVSLVPLVVPIPVMFL, and GLFTSGIQALIFATLAAAYIG.

This sequence belongs to the ATPase A chain family. F-type ATPases have 2 components, CF(1) - the catalytic core - and CF(0) - the membrane proton channel. CF(1) has five subunits: alpha(3), beta(3), gamma(1), delta(1), epsilon(1). CF(0) has four main subunits: a, b, b' and c.

It localises to the plastid. The protein resides in the chloroplast thylakoid membrane. Functionally, key component of the proton channel; it plays a direct role in the translocation of protons across the membrane. The protein is ATP synthase subunit a, chloroplastic of Sorghum bicolor (Sorghum).